We begin with the raw amino-acid sequence, 363 residues long: MQLLQSSVIAATVGAALVAAVPVELEARDSCTFTSAADAKSGKTSCSTITLSNIEVPAGETLDLTGLNDGTTVIFSGETTFGYKEWEGPLISVSGTNIKVQQASGAKIDGDGSRWWDGKGGNGGKTKPKFFYAHKLDSSSITGLQIYNTPVQGFSIQSDNLNITDVTIDNSAGTAEGHNTDAFDVGSSTYINIDGATVYNQDDCLAINSGSHITFTNGYCDGGHGLSIGSVGGRSDNTVEDVTISNSKVVNSQNGVRIKTVYDATGTVSNVKFEDITLSGITKYGLIVEQDYENGSPTGTPTNGIKVSDITFDKVTGTVESDATDIYILCGSGSCTDWTWSGVSITGGKTSSKCENVPTGASC.

The first 20 residues, 1-20 (MQLLQSSVIAATVGAALVAA), serve as a signal peptide directing secretion. A propeptide spanning residues 21-28 (VPVELEAR) is cleaved from the precursor. Residues Cys-31 and Cys-46 are joined by a disulfide bond. 6 PbH1 repeats span residues 158–187 (SDNLNITDVTIDNSAGTAEGHNTDAFDVGS), 188–209 (STYINIDGATVYNQDDCLAINS), 210–230 (GSHITFTNGYCDGGHGLSIGS), 239–260 (VEDVTISNSKVVNSQNGVRIKT), 268–290 (VSNVKFEDITLSGITKYGLIVEQ), and 302–347 (TNGI…SITG). N-linked (GlcNAc...) asparagine glycosylation is present at Asn-162. The active-site Proton donor is Asp-202. Residues Cys-204 and Cys-220 are joined by a disulfide bond. His-224 is a catalytic residue. 2 disulfides stabilise this stretch: Cys-330–Cys-335 and Cys-354–Cys-363.

It belongs to the glycosyl hydrolase 28 family.

The protein localises to the secreted. It catalyses the reaction (1,4-alpha-D-galacturonosyl)n+m + H2O = (1,4-alpha-D-galacturonosyl)n + (1,4-alpha-D-galacturonosyl)m.. Involved in maceration and soft-rotting of plant tissue. Hydrolyzes the 1,4-alpha glycosidic bonds of de-esterified pectate in the smooth region of the plant cell wall. The sequence is that of Probable endopolygalacturonase B (pgaB) from Aspergillus flavus (strain ATCC 200026 / FGSC A1120 / IAM 13836 / NRRL 3357 / JCM 12722 / SRRC 167).